Consider the following 168-residue polypeptide: Transmembrane protein 31 (168 aa).

The span at 1 to 11 (MRLTEKSEGEQ) shows a compositional bias: basic and acidic residues. The segment at 1-63 (MRLTEKSEGE…LPSRRTPTTS (63 aa)) is disordered. 2 stretches are compositionally biased toward polar residues: residues 13-22 (LKPNNSNAPN) and 35-48 (HTPARQRTQRADTQ). Residues 49–63 (PSRCRLPSRRTPTTS) are compositionally biased toward low complexity. The next 2 helical transmembrane spans lie at 119–139 (IGLPIILHLFALSTLYFYKFF) and 148–168 (FFILLVLLLLLFIIVFILIFF).

It localises to the membrane. In Homo sapiens (Human), this protein is Transmembrane protein 31 (TMEM31).